The chain runs to 436 residues: MEKIIVRGGQKLNGTVKVEGAKNAVLPVIAASLLASEEKSVICDVPTLSDVYTINEVLRHLGADVHFENNEVTVNASYALQTEAPFEYVRKMRASVLVMGPLLARTGHARVALPGGCAIGSRPIDQHLKGFEAMGAEIKVGNGFIEAEVKGRLQGAKIYLDFPSVGATENLIMAAALAEGTTTLENVAKEPEIVDLANYINGMGGKIRGAGTGTIKIEGVEKLHGVKHHIIPDRIEAGTFMVAAAITEGNVLVKGAVPEHLTSLIAKMEEMGVTIKDEGEGLRVIGPKELKPIDIKTMPHPGFPTDMQSQMMALLLRASGTSMITETVFENRFMHAEEFRRMNGDIKIEGRSVIINGPVQLQGAEVAATDLRAGAALILAGLVAEGHTRVTELKHLDRGYVDFHQKLAALGADIERVNDESASEQENKEVVSDLNA.

A phosphoenolpyruvate-binding site is contributed by 22-23 (KN). Residue Arg-93 coordinates UDP-N-acetyl-alpha-D-glucosamine. Cys-117 acts as the Proton donor in catalysis. Position 117 is a 2-(S-cysteinyl)pyruvic acid O-phosphothioketal (Cys-117). UDP-N-acetyl-alpha-D-glucosamine is bound by residues 122-126 (RPIDQ), Asp-306, and Val-328.

This sequence belongs to the EPSP synthase family. MurA subfamily.

It is found in the cytoplasm. It catalyses the reaction phosphoenolpyruvate + UDP-N-acetyl-alpha-D-glucosamine = UDP-N-acetyl-3-O-(1-carboxyvinyl)-alpha-D-glucosamine + phosphate. Its pathway is cell wall biogenesis; peptidoglycan biosynthesis. Functionally, cell wall formation. Adds enolpyruvyl to UDP-N-acetylglucosamine. Essential for cell growth. This Bacillus subtilis (strain 168) protein is UDP-N-acetylglucosamine 1-carboxyvinyltransferase 1.